The sequence spans 943 residues: Aconitate hydratase A (943 aa).

Cys479, Cys545, and Cys548 together coordinate [4Fe-4S] cluster.

It belongs to the aconitase/IPM isomerase family. In terms of assembly, monomer. Requires [4Fe-4S] cluster as cofactor.

It carries out the reaction citrate = D-threo-isocitrate. The enzyme catalyses (2S,3R)-3-hydroxybutane-1,2,3-tricarboxylate = 2-methyl-cis-aconitate + H2O. It functions in the pathway carbohydrate metabolism; tricarboxylic acid cycle; isocitrate from oxaloacetate: step 2/2. It participates in organic acid metabolism; propanoate degradation. Involved in the catabolism of short chain fatty acids (SCFA) via the tricarboxylic acid (TCA)(acetyl degradation route) and probably via the 2-methylcitrate cycle I (propionate degradation route). Catalyzes the reversible isomerization of citrate to isocitrate via cis-aconitate. The apo form of AcnA functions as a RNA-binding regulatory protein which binds to selected IRE-like sequences present within the UTRs (untranslated regions) of 3' trxC and 5' IdeR mRNA. Could catalyze the hydration of 2-methyl-cis-aconitate to yield (2R,3S)-2-methylisocitrate. The chain is Aconitate hydratase A (acn) from Mycobacterium tuberculosis (strain ATCC 25618 / H37Rv).